The sequence spans 445 residues: Ubiquitin carboxyl-terminal hydrolase 11 (445 aa).

The USP domain maps to 1–412; that stretch reads NSARADLCVA…AAYVLFYQRQ (412 aa). The segment at 127–194 is disordered; that stretch reads RPSSDDEDDG…GPSHWPQRAR (68 aa). S130 is subject to Phosphoserine. A compositionally biased stretch (acidic residues) spans 131 to 140; sequence DDEDDGDEKD. Residue H362 is the Nucleophile of the active site. The active-site Proton acceptor is the H370. The disordered stretch occupies residues 416-445; it reads RRLQPQPSSSDPPASPACGSPPNSEFMDVN. The span at 420–439 shows a compositional bias: low complexity; it reads PQPSSSDPPASPACGSPPNS. The residue at position 430 (S430) is a Phosphoserine.

This sequence belongs to the peptidase C19 family. Monomer. Interacts with RANBP9/RANBPM. Interacts with BRCA2. Interacts with CHUK/IKKA. Interacts with NFKBIA. Associated component of the Polycomb group (PcG) multiprotein PRC1-like complex.

The protein resides in the nucleus. It localises to the cytoplasm. It is found in the chromosome. The enzyme catalyses Thiol-dependent hydrolysis of ester, thioester, amide, peptide and isopeptide bonds formed by the C-terminal Gly of ubiquitin (a 76-residue protein attached to proteins as an intracellular targeting signal).. In terms of biological role, protease that can remove conjugated ubiquitin from target proteins and polyubiquitin chains. Inhibits the degradation of target proteins by the proteasome. Cleaves preferentially 'Lys-6' and 'Lys-63'-linked ubiquitin chains. Has lower activity with 'Lys-11' and 'Lys-33'-linked ubiquitin chains, and extremely low activity with 'Lys-27', 'Lys-29' and 'Lys-48'-linked ubiquitin chains (in vitro). Plays a role in the regulation of pathways leading to NF-kappa-B activation. Plays a role in the regulation of DNA repair after double-stranded DNA breaks. Acts as a chromatin regulator via its association with the Polycomb group (PcG) multiprotein PRC1-like complex; may act by deubiquitinating components of the PRC1-like complex. Promotes cell proliferation by deubiquitinating phosphorylated E2F1. This is Ubiquitin carboxyl-terminal hydrolase 11 (USP11) from Canis lupus familiaris (Dog).